We begin with the raw amino-acid sequence, 974 residues long: Protein bicaudal C homolog 1 (974 aa).

The tract at residues 1–50 (MAAQGEPGYLAAQSDPGSNSERSTDSPVPGSEDDLVAGATLHSPEWSEER) is disordered. Residues serine 26, serine 31, and serine 43 each carry the phosphoserine modification. KH domains lie at 132 to 199 (RVTL…RVRI) and 284 to 348 (PVST…RQYL). Residue lysine 398 is modified to N6-acetyllysine. 3 positions are modified to phosphoserine: serine 576, serine 612, and serine 679. Disordered stretches follow at residues 593-644 (VLSA…GDLK), 665-719 (GTKN…HLAP), and 783-846 (YKPT…KSTE). Residues 602-619 (SIQTSGSEQTSPKSSPTE) show a composition bias toward polar residues. Basic and acidic residues predominate over residues 690–703 (LADKKAPGSERAAE). The SAM domain occupies 873 to 936 (FKGSDLPELF…LLAISELNKN (64 aa)).

The protein belongs to the BicC family. In terms of assembly, interacts (via KH domains) with ANKS6 (via SAM domain) in an RNA-dependent manner. Interacts with ANKS3.

The protein resides in the cytoplasm. Its function is as follows. Putative RNA-binding protein. Acts as a negative regulator of Wnt signaling. May be involved in regulating gene expression during embryonic development. The protein is Protein bicaudal C homolog 1 (BICC1) of Homo sapiens (Human).